The sequence spans 351 residues: Type II restriction enzyme NmeDI (351 aa).

The catalysed reaction is Endonucleolytic cleavage of DNA to give specific double-stranded fragments with terminal 5'-phosphates.. In terms of biological role, a P subtype restriction enzyme that recognizes the double-stranded sequence 5'-N(12)RCCGGYN(12)-3' and cleaves on both sides of the recognition sequence. The chain is Type II restriction enzyme NmeDI (nmeDIRP) from Neisseria meningitidis serogroup C.